The sequence spans 383 residues: Caspase a (383 aa).

The propeptide occupies 1-142 (MAKSIKDHLQ…ETYEIKDKSV (142 aa)). The region spanning 8–81 (HLQDALSNIG…RGIKCNAVAE (74 aa)) is the Pyrin domain. The interval 87–106 (TGQGGVSQPEPPVPEPIPKD) is disordered. Active-site residues include histidine 220 and cysteine 270. The propeptide occupies 275–296 (HGRVWASDGEPDEPIEIEDDDF).

Belongs to the peptidase C14A family. As to quaternary structure, heterotetramer that consists of two anti-parallel arranged heterodimers, each one formed by a 20 kDa (p20) and a 10 kDa (p10) subunit. Interacts (via pyrin domain) with pycard (via pyrin domain). Interacts with caspb. Component of NLRP1 inflammasomes. Inflammasomes are supramolecular complexes that assemble in the cytosol in response to pathogens and other damage-associated signals and play critical roles in innate immunity and inflammation. The NLRP1 inflammasome is composed of the signal sensor nlrp1, and the adapter pycard (asc), which recruit effector pro-inflammatory caspases caspa and/or caspb. The interaction between nlrp1 and pycard is required for the sequential recruitment of caspa and then caspb. Caspa is preferentially recruited first and this causes the cleavage of pro-il1b into the midformed il1b. This is followed by the recruitment of caspb, which is activated and cleaves the midformed il1b resulting in il1b maturation. Interacts with caiap. Post-translationally, the two subunits are derived from the precursor sequence by an autocatalytic mechanism.

The protein localises to the inflammasome. It is found in the cytoplasm. It carries out the reaction Strict requirement for an Asp residue at position P1 and has a preferred cleavage sequence of Tyr-Val-Ala-Asp-|-.. In terms of biological role, thiol protease which cleaves IL-1 beta (il1b), releasing the mature cytokine which is involved in a variety of inflammatory processes, and mediates apoptosis. Component of the NLRP1 inflammasome, which plays a crucial role in innate immunity and inflammation. In response to pathogens and other damage-associated signals, recruited to the NLRP1 inflammasome in its precursor form. Its subsequent activation causes the cleavage of pro-il1b into the midformed il1b, which then evetually leads to il1b maturation and secretion in the extracellular milieu. Required for the development of the cartilaginous pharyngeal skeleton. The polypeptide is Caspase a (Danio rerio (Zebrafish)).